Consider the following 381-residue polypeptide: Prolargin (381 aa).

The N-terminal stretch at 1–21 is a signal peptide; it reads MRSSLCWLLTLLLILATAAQG. Residues 19–65 form a disordered region; it reads AQGQPTRRPRPRPRPRPRPRLRPTPSFPQPDEPTEPTDLPPPLPPGP. Residues 25–39 are compositionally biased toward basic residues; the sequence is RRPRPRPRPRPRPRL. Positions 56-65 are enriched in pro residues; the sequence is DLPPPLPPGP. LRR repeat units follow at residues 94-113, 114-137, 138-161, 162-182, 183-206, 207-232, 233-253, 254-277, 278-302, 303-322, 323-361, and 362-381; these read RKVPVIPSRIHYLYLQNNFI, TELPVESFKNATGLRWINLDNNRI, RKVDQRVLEKLPSLVFLYLEKNQL, EEVPAALPRNLEQLRLSQNQI, SRIPPGVFSKLENLLLLDLQHNKL, SDGVFKPDTFQGLKNLMQLNLAHNTL, RKMPPKVPSAIHQLYLDSNRI, EAIPSGYFKGFPNLAFIRLNYNQL, SDRGLPKNSFNISNLLVLHLSHNRI, SSVPAISSRLEHLYLNNNSI, EKINGTQICPNNIVAFHDFSSDLEHVPHLRYLRLDGNYL, and KPPIPLDLMMCFRLLQSVVI. N-linked (GlcNAc...) asparagine glycosylation is present at asparagine 123. N-linked (GlcNAc...) asparagine glycosylation is found at asparagine 288, asparagine 319, and asparagine 326. An intrachain disulfide couples cysteine 331 to cysteine 372.

This sequence belongs to the small leucine-rich proteoglycan (SLRP) family. SLRP class II subfamily. Binds the basement membrane heparan sulfate proteoglycan perlecan and triple helical collagens type I and type II. Glycosylated; contains heparan sulfate.

The protein localises to the secreted. It is found in the extracellular space. It localises to the extracellular matrix. Functionally, may anchor basement membranes to the underlying connective tissue. The sequence is that of Prolargin (PRELP) from Bos taurus (Bovine).